A 401-amino-acid chain; its full sequence is MSKLVLILNCGSSSLKFAILDPATGEEKLSGLAEAFFLPEARIKWKLNGEKGNADLGAGAAHTEALNFIASNILNDELKNSIAAIGHRIVHGGEKYTQSVIVTDEVVKGIEDAAQFAPLHNPAHLIGIREAFKAFPHLKDKNVVVFDTAFHQTMPEEAFLYALPYSLYKEHGVRRYGAHGTSHYFVSREVAKYVGKPADQVNAIICHLGNGGSVSVVRNGQCIDTSMGLTPLEGLVMGTRCGDIDPAIVFYLYKTLGMSMDQIEETLVKKSGLLGLTEVTSDCRYAEDNYDDESKPETRRALNVYSYRLAKYIGAYMAVLGDDHLDAIAFTGGIGENSAHVRELALNHLKLFGIKIDNERNLATRFGKDGVITTDDSAFKAIVLPTNEELVIAQDTAKLCF.

Residue Asn-9 participates in Mg(2+) binding. Position 16 (Lys-16) interacts with ATP. Residue Arg-88 participates in substrate binding. Residue Asp-147 is the Proton donor/acceptor of the active site. Residues 207-211 (HLGNG), 282-284 (DCR), and 333-337 (GIGEN) each bind ATP. Glu-388 is a Mg(2+) binding site.

It belongs to the acetokinase family. Homodimer. Mg(2+) is required as a cofactor. Mn(2+) serves as cofactor.

Its subcellular location is the cytoplasm. The catalysed reaction is acetate + ATP = acetyl phosphate + ADP. The protein operates within metabolic intermediate biosynthesis; acetyl-CoA biosynthesis; acetyl-CoA from acetate: step 1/2. Its function is as follows. Catalyzes the formation of acetyl phosphate from acetate and ATP. Can also catalyze the reverse reaction. The chain is Acetate kinase from Haemophilus influenzae (strain ATCC 51907 / DSM 11121 / KW20 / Rd).